The chain runs to 404 residues: Multidrug resistance protein MdtG (404 aa).

The next 11 membrane-spanning stretches (helical) occupy residues 19–39, 56–76, 90–110, 113–133, 144–164, 171–191, 222–242, 254–274, 288–308, 317–337, and 376–396; these read LGCF…PLYV, LVFS…GGLA, LGMA…QFLI, ALLG…ATQV, TLST…GLLA, PVFF…FFFI, LFVT…ILTL, IAFI…LSAP, ILIV…FVQT, FLLG…LVYN, and AVFC…WNSL.

It belongs to the major facilitator superfamily. DHA1 family. MdtG (TC 2.A.1.2.20) subfamily.

It is found in the cell inner membrane. The protein is Multidrug resistance protein MdtG of Salmonella dublin (strain CT_02021853).